Reading from the N-terminus, the 309-residue chain is Protease HtpX homolog (309 aa).

The next 2 membrane-spanning stretches (helical) occupy residues T7–G27 and Q29–S49. H131 is a Zn(2+) binding site. E132 is a catalytic residue. H135 serves as a coordination point for Zn(2+). The next 2 helical transmembrane spans lie at I141–A161 and I182–I202. Zn(2+) is bound at residue E207. Residues R278–R309 form a disordered region.

This sequence belongs to the peptidase M48B family. The cofactor is Zn(2+).

The protein localises to the cell inner membrane. This chain is Protease HtpX homolog, found in Desulforapulum autotrophicum (strain ATCC 43914 / DSM 3382 / VKM B-1955 / HRM2) (Desulfobacterium autotrophicum).